A 340-amino-acid chain; its full sequence is Centromere protein N (340 aa).

A phosphoserine mark is found at Ser227 and Ser236.

Belongs to the CENP-N/CHL4 family. As to quaternary structure, component of the CENPA-NAC complex, at least composed of CENPA, CENPC, CENPH, CENPM, CENPN, CENPT and CENPU. The CENPA-NAC complex interacts with the CENPA-CAD complex, composed of CENPI, CENPK, CENPL, CENPO, CENPP, CENPQ, CENPR and CENPS. Interacts directly with CENPA. Identified in a centromere complex containing histones H2A, H2B and H4, and at least CENPA, CENPB, CENPC, CENPT, CENPN, HJURP, SUPT16H, SSRP1 and RSF1.

The protein resides in the nucleus. It is found in the chromosome. Its subcellular location is the centromere. The protein localises to the kinetochore. Its function is as follows. Component of the CENPA-NAC (nucleosome-associated) complex, a complex that plays a central role in assembly of kinetochore proteins, mitotic progression and chromosome segregation. The CENPA-NAC complex recruits the CENPA-CAD (nucleosome distal) complex and may be involved in incorporation of newly synthesized CENPA into centromeres. CENPN is the first protein to bind specifically to CENPA nucleosomes and the direct binding of CENPA nucleosomes by CENPN is required for centromere assembly. Required for chromosome congression and efficiently align the chromosomes on a metaphase plate. The protein is Centromere protein N (Cenpn) of Rattus norvegicus (Rat).